A 307-amino-acid polypeptide reads, in one-letter code: MPSEHPFSDGISTPNPKETMNDTAQITASYGRRYIVRTPDGTTYEASTRKKRVDFACGDRVRISPVNAEQVVIEDFLPRQSLLYRQDAWKTKLIAANVTQLLIVTAAVPSPSVRLLQRALLAAEAAGIRAVIVLNKADLPETALWREKLKFYETLGYPVIETRALENAGSLRPALQGHSNILLGQSGMGKSTLTNALLGSQTARTGDISAALDSGKHTTTHARLYDLNGETQLIDSPGLQEFGLHHLQAADLPRYFPDFRHLVGQCRFHNCTHRAEPGCAFKAAAETRAASPERLAFLQGITDELPG.

Residues 1–20 form a disordered region; it reads MPSEHPFSDGISTPNPKETM. The span at 10-20 shows a compositional bias: polar residues; it reads GISTPNPKETM. The CP-type G domain maps to 85 to 242; sequence RQDAWKTKLI…LIDSPGLQEF (158 aa). Residues 135-138 and 184-192 each bind GTP; these read NKAD and GQSGMGKST. Zn(2+) contacts are provided by Cys266, Cys271, His273, and Cys279.

This sequence belongs to the TRAFAC class YlqF/YawG GTPase family. RsgA subfamily. In terms of assembly, monomer. Associates with 30S ribosomal subunit, binds 16S rRNA. Zn(2+) is required as a cofactor.

It localises to the cytoplasm. Functionally, one of several proteins that assist in the late maturation steps of the functional core of the 30S ribosomal subunit. Helps release RbfA from mature subunits. May play a role in the assembly of ribosomal proteins into the subunit. Circularly permuted GTPase that catalyzes slow GTP hydrolysis, GTPase activity is stimulated by the 30S ribosomal subunit. This chain is Small ribosomal subunit biogenesis GTPase RsgA, found in Neisseria meningitidis serogroup A / serotype 4A (strain DSM 15465 / Z2491).